The chain runs to 61 residues: Sec-independent protein translocase protein TatA (61 aa).

A helical transmembrane segment spans residues 1–21; the sequence is MFSNIGFPGLILILVAVLILF.

The protein belongs to the TatA/E family. Forms a complex with TatC.

The protein localises to the cell membrane. In terms of biological role, part of the twin-arginine translocation (Tat) system that transports large folded proteins containing a characteristic twin-arginine motif in their signal peptide across membranes. TatA could form the protein-conducting channel of the Tat system. The protein is Sec-independent protein translocase protein TatA of Bacillus anthracis (strain A0248).